Here is a 150-residue protein sequence, read N- to C-terminus: Leukotriene C4 synthase (150 aa).

Residues 1 to 6 lie on the Cytoplasmic side of the membrane; it reads MKDEVA. A helical transmembrane segment spans residues 7–27; that stretch reads LLATVTLVGVLLQAYFSLQVI. Residues 28-48 are Lumenal-facing; it reads SARRAFHVSPPLTSGPPEFER. Arg30 is a binding site for glutathione. Arg31 acts as the Proton donor in catalysis. Ser36 carries the post-translational modification Phosphoserine. A helical membrane pass occupies residues 49–69; sequence VFRAQVNCSEYFPLFLATLWV. Glutathione-binding positions include 51–55, Gln53, and 58–59; these read RAQVN and EY. The Cytoplasmic segment spans residues 70-73; it reads AGIF. A helical transmembrane segment spans residues 74 to 94; it reads FHEGAAALCGLFYLFARLRYF. 93–97 contributes to the glutathione binding site; sequence YFQGY. The Lumenal segment spans residues 95 to 104; it reads QGYARSAQLR. Residue Arg104 is the Proton acceptor of the active site. The chain crosses the membrane as a helical span at residues 105-124; sequence LTPLYASARALWLLVAMAAL. Topologically, residues 125–150 are cytoplasmic; that stretch reads GLLVHFLPGTLRTALFRWLQMLLPMA.

This sequence belongs to the MAPEG family. As to quaternary structure, homotrimer. Interacts with ALOX5AP and ALOX5. In terms of processing, phosphorylation at Ser-36 by RPS6KB1 inhibits the leukotriene-C4 synthase activity. In terms of tissue distribution, widely expressed.

It is found in the nucleus outer membrane. The protein resides in the endoplasmic reticulum membrane. It localises to the nucleus membrane. The enzyme catalyses leukotriene C4 = leukotriene A4 + glutathione. It carries out the reaction (13S,14S)-epoxy-(4Z,7Z,9E,11E,16Z,19Z)-docosahexaenoate + glutathione = (13R)-S-glutathionyl-(14S)-hydroxy-(4Z,7Z,9E,11E,16Z,19Z)-docosahexaenoate. The protein operates within lipid metabolism; leukotriene C4 biosynthesis. Its activity is regulated as follows. Inhibited by MK886. Functionally, catalyzes the conjugation of leukotriene A4 with reduced glutathione (GSH) to form leukotriene C4 with high specificity. Can also catalyze the transfer of a glutathionyl group from glutathione (GSH) to 13(S),14(S)-epoxy-docosahexaenoic acid to form maresin conjugate in tissue regeneration 1 (MCTR1), a bioactive lipid mediator that possess potent anti-inflammatory and proresolving actions. This chain is Leukotriene C4 synthase (Ltc4s), found in Mus musculus (Mouse).